The chain runs to 352 residues: Photosystem II D2 protein (352 aa).

Over 1-31 the chain is Cytoplasmic; it reads MTIAVGRAPVERGWFDVLDDWLKRDRFVFIG. The helical transmembrane segment at 32–53 threads the bilayer; it reads WSGLLLFPCAFMALGGWLTGTT. Topologically, residues 54-108 are lumenal, thylakoid; it reads FVTSWYTHGLASSYLEGANFLTVAVSSPADAFGHSLLFLWGPEAQGNLTRWFQIG. The helical transmembrane segment at 109 to 131 threads the bilayer; that stretch reads GLWPFVALHGAFGLIGFMLRQFE. H117 is a binding site for chlorophyll a. Q129 lines the pheophytin a pocket. Topologically, residues 132–140 are cytoplasmic; the sequence is ISRLVGIRP. Residues 141-162 traverse the membrane as a helical segment; the sequence is YNAIAFSGPIAVFVSVFLMYPL. N142 is a pheophytin a binding site. Topologically, residues 163–190 are lumenal, thylakoid; that stretch reads GQSSWFFAPSFGVAGIFRFILFLQGFHN. A helical transmembrane segment spans residues 191 to 217; the sequence is WTLNPFHMMGVAGILGGALLCAIHGAT. H197 serves as a coordination point for chlorophyll a. H214 and F261 together coordinate a plastoquinone. A Fe cation-binding site is contributed by H214. The Cytoplasmic portion of the chain corresponds to 218-265; sequence VENTLFEDGEDSNTFRAFEPTQAEETYSMVTANRFWSQIFGIAFSNKR. The helical transmembrane segment at 266-288 threads the bilayer; the sequence is WLHFFMLFVPVTGLWMSSVGIVG. A Fe cation-binding site is contributed by H268. Topologically, residues 289 to 352 are lumenal, thylakoid; that stretch reads LALNLRAYDF…EEVLPRGNAL (64 aa).

The protein belongs to the reaction center PufL/M/PsbA/D family. As to quaternary structure, PSII is composed of 1 copy each of membrane proteins PsbA, PsbB, PsbC, PsbD, PsbE, PsbF, PsbH, PsbI, PsbJ, PsbK, PsbL, PsbM, PsbT, PsbX, PsbY, PsbZ, Psb30/Ycf12, peripheral proteins PsbO, CyanoQ (PsbQ), PsbU, PsbV and a large number of cofactors. It forms dimeric complexes. The D1/D2 heterodimer binds P680, chlorophylls that are the primary electron donor of PSII, and subsequent electron acceptors. It shares a non-heme iron and each subunit binds pheophytin, quinone, additional chlorophylls, carotenoids and lipids. There is also a Cl(-1) ion associated with D1 and D2, which is required for oxygen evolution. The PSII complex binds additional chlorophylls, carotenoids and specific lipids. serves as cofactor.

It is found in the cellular thylakoid membrane. It carries out the reaction 2 a plastoquinone + 4 hnu + 2 H2O = 2 a plastoquinol + O2. Its function is as follows. Photosystem II (PSII) is a light-driven water:plastoquinone oxidoreductase that uses light energy to abstract electrons from H(2)O, generating O(2) and a proton gradient subsequently used for ATP formation. It consists of a core antenna complex that captures photons, and an electron transfer chain that converts photonic excitation into a charge separation. The D1/D2 (PsbA/PsbD) reaction center heterodimer binds P680, the primary electron donor of PSII as well as several subsequent electron acceptors. D2 is needed for assembly of a stable PSII complex. The chain is Photosystem II D2 protein from Synechocystis sp. (strain ATCC 27184 / PCC 6803 / Kazusa).